A 130-amino-acid chain; its full sequence is Small ribosomal subunit protein uS8 (130 aa).

This sequence belongs to the universal ribosomal protein uS8 family. As to quaternary structure, part of the 30S ribosomal subunit.

In terms of biological role, one of the primary rRNA binding proteins, it binds directly to 16S rRNA central domain where it helps coordinate assembly of the platform of the 30S subunit. The sequence is that of Small ribosomal subunit protein uS8 from Methanothermobacter thermautotrophicus (strain ATCC 29096 / DSM 1053 / JCM 10044 / NBRC 100330 / Delta H) (Methanobacterium thermoautotrophicum).